Here is a 115-residue protein sequence, read N- to C-terminus: Holo-[acyl-carrier-protein] synthase (115 aa).

Residues Asp6 and Glu51 each contribute to the Mg(2+) site.

This sequence belongs to the P-Pant transferase superfamily. AcpS family. Requires Mg(2+) as cofactor.

The protein resides in the cytoplasm. It catalyses the reaction apo-[ACP] + CoA = holo-[ACP] + adenosine 3',5'-bisphosphate + H(+). Functionally, transfers the 4'-phosphopantetheine moiety from coenzyme A to a Ser of acyl-carrier-protein. This chain is Holo-[acyl-carrier-protein] synthase, found in Campylobacter jejuni subsp. jejuni serotype O:6 (strain 81116 / NCTC 11828).